The following is a 346-amino-acid chain: tRNA N6-adenosine threonylcarbamoyltransferase (346 aa).

2 residues coordinate Fe cation: histidine 111 and histidine 115. Residues 134 to 138 (LVSGG), aspartate 167, glycine 180, and asparagine 277 contribute to the substrate site. Position 305 (aspartate 305) interacts with Fe cation.

Belongs to the KAE1 / TsaD family. The cofactor is Fe(2+).

The protein localises to the cytoplasm. The enzyme catalyses L-threonylcarbamoyladenylate + adenosine(37) in tRNA = N(6)-L-threonylcarbamoyladenosine(37) in tRNA + AMP + H(+). Required for the formation of a threonylcarbamoyl group on adenosine at position 37 (t(6)A37) in tRNAs that read codons beginning with adenine. Is involved in the transfer of the threonylcarbamoyl moiety of threonylcarbamoyl-AMP (TC-AMP) to the N6 group of A37, together with TsaE and TsaB. TsaD likely plays a direct catalytic role in this reaction. The sequence is that of tRNA N6-adenosine threonylcarbamoyltransferase from Bordetella parapertussis (strain 12822 / ATCC BAA-587 / NCTC 13253).